The following is a 219-amino-acid chain: Thiamine-phosphate synthase (219 aa).

Residues 48 to 52 and Asn84 contribute to the 4-amino-2-methyl-5-(diphosphooxymethyl)pyrimidine site; that span reads QFRQK. Residues Asp85 and Asp104 each contribute to the Mg(2+) site. Ser123 contacts 4-amino-2-methyl-5-(diphosphooxymethyl)pyrimidine. A 2-[(2R,5Z)-2-carboxy-4-methylthiazol-5(2H)-ylidene]ethyl phosphate-binding site is contributed by 150–152; sequence TPS. Lys153 is a binding site for 4-amino-2-methyl-5-(diphosphooxymethyl)pyrimidine. 2-[(2R,5Z)-2-carboxy-4-methylthiazol-5(2H)-ylidene]ethyl phosphate is bound by residues Gly181 and 199 to 200; that span reads IS.

The protein belongs to the thiamine-phosphate synthase family. The cofactor is Mg(2+).

The catalysed reaction is 2-[(2R,5Z)-2-carboxy-4-methylthiazol-5(2H)-ylidene]ethyl phosphate + 4-amino-2-methyl-5-(diphosphooxymethyl)pyrimidine + 2 H(+) = thiamine phosphate + CO2 + diphosphate. It carries out the reaction 2-(2-carboxy-4-methylthiazol-5-yl)ethyl phosphate + 4-amino-2-methyl-5-(diphosphooxymethyl)pyrimidine + 2 H(+) = thiamine phosphate + CO2 + diphosphate. It catalyses the reaction 4-methyl-5-(2-phosphooxyethyl)-thiazole + 4-amino-2-methyl-5-(diphosphooxymethyl)pyrimidine + H(+) = thiamine phosphate + diphosphate. It participates in cofactor biosynthesis; thiamine diphosphate biosynthesis; thiamine phosphate from 4-amino-2-methyl-5-diphosphomethylpyrimidine and 4-methyl-5-(2-phosphoethyl)-thiazole: step 1/1. In terms of biological role, condenses 4-methyl-5-(beta-hydroxyethyl)thiazole monophosphate (THZ-P) and 2-methyl-4-amino-5-hydroxymethyl pyrimidine pyrophosphate (HMP-PP) to form thiamine monophosphate (TMP). The sequence is that of Thiamine-phosphate synthase from Helicobacter pylori (strain ATCC 700392 / 26695) (Campylobacter pylori).